We begin with the raw amino-acid sequence, 197 residues long: ADP-ribosylation factor 1 (197 aa).

Glycine 2 carries N-myristoyl glycine lipidation. Residues 24–31 (GLDAAGKT), 67–71 (DVGGQ), and 126–129 (NKQD) contribute to the GTP site.

It belongs to the small GTPase superfamily. Arf family.

It localises to the golgi apparatus. It catalyses the reaction GTP + H2O = GDP + phosphate + H(+). GTP-binding protein involved in protein trafficking; may modulate vesicle budding and uncoating within the Golgi apparatus. The protein is ADP-ribosylation factor 1 of Solanum tuberosum (Potato).